Here is a 124-residue protein sequence, read N- to C-terminus: Small ribosomal subunit protein uS12 (124 aa).

At Asp-89 the chain carries 3-methylthioaspartic acid. The segment at 104–124 (TAGVKDRRQSRSKYGAKAPKE) is disordered.

This sequence belongs to the universal ribosomal protein uS12 family. Part of the 30S ribosomal subunit. Contacts proteins S8 and S17. May interact with IF1 in the 30S initiation complex.

Functionally, with S4 and S5 plays an important role in translational accuracy. Its function is as follows. Interacts with and stabilizes bases of the 16S rRNA that are involved in tRNA selection in the A site and with the mRNA backbone. Located at the interface of the 30S and 50S subunits, it traverses the body of the 30S subunit contacting proteins on the other side and probably holding the rRNA structure together. The combined cluster of proteins S8, S12 and S17 appears to hold together the shoulder and platform of the 30S subunit. This is Small ribosomal subunit protein uS12 from Synechococcus sp. (strain CC9605).